We begin with the raw amino-acid sequence, 120 residues long: Putative gamma-glutamylcyclotransferase MJ1514 (120 aa).

Residue 7–10 coordinates substrate; sequence YGSL. Glu-74 serves as the catalytic Proton acceptor.

Belongs to the gamma-glutamylcyclotransferase family.

Putative gamma-glutamylcyclotransferase. The chain is Putative gamma-glutamylcyclotransferase MJ1514 from Methanocaldococcus jannaschii (strain ATCC 43067 / DSM 2661 / JAL-1 / JCM 10045 / NBRC 100440) (Methanococcus jannaschii).